The sequence spans 165 residues: Growth arrest and DNA damage-inducible protein GADD45 alpha (165 aa).

The residue at position 2 (threonine 2) is a Phosphothreonine.

This sequence belongs to the GADD45 family. In terms of assembly, interacts with AURKA, PCNA, GADD45GIP1 and MAPK14.

The protein localises to the nucleus. Its function is as follows. Might affect PCNA interaction with some CDK (cell division protein kinase) complexes; stimulates DNA excision repair in vitro and inhibits entry of cells into S phase. In T-cells, functions as a regulator of p38 MAPKs by inhibiting p88 phosphorylation and activity. The polypeptide is Growth arrest and DNA damage-inducible protein GADD45 alpha (GADD45A) (Bos taurus (Bovine)).